The primary structure comprises 1503 residues: E3 ubiquitin-protein ligase listerin (1503 aa).

HEAT repeat units lie at residues 52-89, 93-129, 133-170, 280-318, 323-345, 346-384, 552-589, 640-663, 664-700, 845-882, 1022-1065, 1078-1117, 1141-1183, and 1302-1340; these read SGID…ETSS, CYEH…KLEK, KGLK…ADKK, LNTP…SAQF, SLQN…HWRV, LQHF…NLPW, GDIV…TGGS, AENV…NEAE, KNVL…DFNS, LEKR…LDDS, TLFI…RMFR, RTLL…SLLE, AAAK…VMIS, and FKSI…KLLI. The RING-type zinc finger occupies 1446–1499; it reads CTICMMTVHQQTNQLPKVKCKQCKNRFHSNCLVSSFHTYKWFESSNQSTCPLCR.

It belongs to the LTN1 family. Component of the ribosome quality control complex (RQC), composed of at least the E3 ubiquitin ligase ltn1 and nemf. The complex probably also contains tcf25 as well as vcp/p97 and its ubiquitin-binding cofactors. RQC forms a stable complex with 60S ribosomal subunits.

Its subcellular location is the cytoplasm. It localises to the cytosol. It catalyses the reaction S-ubiquitinyl-[E2 ubiquitin-conjugating enzyme]-L-cysteine + [acceptor protein]-L-lysine = [E2 ubiquitin-conjugating enzyme]-L-cysteine + N(6)-ubiquitinyl-[acceptor protein]-L-lysine.. Its pathway is protein modification; protein ubiquitination. Functionally, E3 ubiquitin-protein ligase. Component of the ribosome quality control complex (RQC), a ribosome-associated complex that mediates ubiquitination and extraction of incompletely synthesized nascent chains for proteasomal degradation. Ubiquitination leads to vcp/p97 recruitment for extraction and degradation of the incomplete translation product. This is E3 ubiquitin-protein ligase listerin from Caenorhabditis briggsae.